The primary structure comprises 121 residues: MARIAGVNIPNHQHTEIGLTAIFGVGRTRSRSICVAAGVDFSKKVKDLTDADLEKLREEVGKFVVEGDLRREVTMNIKRLMDLGCYRGVRHRKGLPMRGQRTRTNARTRKGPRRAAQALKK.

The disordered stretch occupies residues 92 to 121 (RKGLPMRGQRTRTNARTRKGPRRAAQALKK).

It belongs to the universal ribosomal protein uS13 family. As to quaternary structure, part of the 30S ribosomal subunit. Forms a loose heterodimer with protein S19. Forms two bridges to the 50S subunit in the 70S ribosome.

Functionally, located at the top of the head of the 30S subunit, it contacts several helices of the 16S rRNA. In the 70S ribosome it contacts the 23S rRNA (bridge B1a) and protein L5 of the 50S subunit (bridge B1b), connecting the 2 subunits; these bridges are implicated in subunit movement. Contacts the tRNAs in the A and P-sites. This chain is Small ribosomal subunit protein uS13, found in Burkholderia cenocepacia (strain HI2424).